Consider the following 276-residue polypeptide: N-acyl homoserine lactonase AiiB (276 aa).

Zn(2+) is bound by residues histidine 111, histidine 113, histidine 116, histidine 191, aspartate 213, and histidine 259.

Belongs to the metallo-beta-lactamase superfamily. Zn(2+) serves as cofactor.

It carries out the reaction an N-acyl-L-homoserine lactone + H2O = an N-acyl-L-homoserine + H(+). The protein is N-acyl homoserine lactonase AiiB of Rhizobium rhizogenes (strain K84 / ATCC BAA-868) (Agrobacterium radiobacter).